A 582-amino-acid chain; its full sequence is MPIRRLDPTTINRIAAGEVIERPAAAVKELVENALDAGARRIGVTIEGGGIGRIEVTDDGHGIPEAELPLAIERHATSKLTDEALVRIATLGFRGEALPSIGAAGRLTVTSRPAGQDSAARIVVDGGAVREVEPVAGPVGTCVTVEDLFHATPARRKFLRSAGSEAGSCADAVRHLALAAPAVGFSLTIDGAASFDLPPQDRRERVAAIYGRADAEKLLEIEAVREEVALRGFISPASLTRAAARHQHMVVNGRPVRDPLLRMALRLAYRERIPAGRHPLAALWLEIPAEMLDVNVHPAKAELRFATPDAVRSLMIGAVQRALATPADLAAAPSVSMPRTSWAASSPMPRYPQAESRAARGFAEAELRGLDLPPARVAPEVLPESRPDYPLGTPIAQVFDTYILAQSGDGTLVLVDQHAAHERLTEIRLRAERDSGAIPAQALLAPSVVELPAEDIARLLGAAERLAGLGLEIEAFGPGAVLVRAVPAALAKADPAALARDVADTLAESGTAMALEAKLDAVLIRMACHRSVRAGRRLAFAEMEALLRAMETTPLAQTCPHGRPTVLRLSRGDLERMFGRAG.

Belongs to the DNA mismatch repair MutL/HexB family.

Functionally, this protein is involved in the repair of mismatches in DNA. It is required for dam-dependent methyl-directed DNA mismatch repair. May act as a 'molecular matchmaker', a protein that promotes the formation of a stable complex between two or more DNA-binding proteins in an ATP-dependent manner without itself being part of a final effector complex. The protein is DNA mismatch repair protein MutL of Acidiphilium cryptum (strain JF-5).